A 233-amino-acid polypeptide reads, in one-letter code: MSKEIPTPYMWSYQPQMGLAAGASQDYSSRMNWLSAGPHMIGRVNGIRATRNQILLEQAALTSTPRSQLNPPNWPAAQVYQENPAPTTVLLPRDAEAEVQMTNSGAQLAGGSRHVRFRGRSSPYSPGPIKRLIIRGRGIQLNDEVVSSLTGLRPDGVFQLGGAGRSSFTPRQAYLTLQSSSSQPRSGGIGTLQFVEEFVPSVYFNPFSGAPGLYPDDFIPNYDAVSESVDGYD.

Threonine 64 is subject to Phosphothreonine; by host. The propeptide occupies 112–163; sequence SRHVRFRGRSSPYSPGPIKRLIIRGRGIQLNDEVVSSLTGLRPDGVFQLGGA. Phosphoserine; by host is present on serine 180.

Belongs to the adenoviridae hexon-linking protein family. In terms of assembly, interacts with the peripentonal hexons as well as the hexons in the facets. Part of a complex composed of the core-capsid bridging protein, the endosome lysis protein VI and the hexon-linking protein VIII; these interactions bridge the virus core to the capsid. In terms of processing, cleaved by the viral protease during virion maturation. May cause the middle segment to be shed from the capsid.

Its subcellular location is the virion. The protein localises to the host nucleus. Its function is as follows. Structural component of the virion that acts as a cement protein on the capsid interior and which glue the peripentonal hexons and group-of-nine hexons together. This chain is Pre-hexon-linking protein VIII, found in Homo sapiens (Human).